We begin with the raw amino-acid sequence, 547 residues long: Varicidin biosynthesis cluster MFS-type transporer (547 aa).

A compositionally biased stretch (polar residues) spans 1 to 17 (MTTSTSKNAISKSSQED). Residues 1–33 (MTTSTSKNAISKSSQEDLCSDTKDKGSSGGGNE) form a disordered region. A run of 11 helical transmembrane segments spans residues 47–67 (LVLL…VCIS), 156–176 (LAPS…SVFT), 183–203 (WCFW…FLFV), 224–244 (ALGT…LQWG), 252–272 (SWRV…WLYV), 296–316 (ILFT…VPIW), 330–350 (INFL…GTLV), 360–382 (GQWR…WRYN), 392–412 (AGTL…PFIA), 422–442 (ISLG…VFLA), and 503–523 (CFLV…GMEW).

It belongs to the major facilitator superfamily. TCR/Tet family.

It localises to the cell membrane. Functionally, MFS-type transporer; part of the gene cluster that mediates the biosynthesis of varicidin A, an antifungal natural product containing a cis-octahydrodecalin core. This chain is Varicidin biosynthesis cluster MFS-type transporer, found in Talaromyces variabilis (Penicillium variabile).